Here is an 87-residue protein sequence, read N- to C-terminus: Homeotic protein ultrabithorax (87 aa).

The Antp-type hexapeptide signature appears at 22-27 (FYPWMA).

It belongs to the Antp homeobox family. In the embryo, expression is seen in the epidermis, somatic and visceral mesoderm, and the peripheral and central nervous system.

It is found in the nucleus. Functionally, sequence-specific transcription factor which is part of a developmental regulatory system that provides cells with specific positional identities on the anterior-posterior axis. Binds the consensus region 5'-TTAAT[GT][GA]-3'. This homeotic protein controls development of the cells in the posterior thoracic and first abdominal segments. It activates the synthesis of the decapentaplegic (DPP) growth factor. In Drosophila virilis (Fruit fly), this protein is Homeotic protein ultrabithorax (Ubx).